A 282-amino-acid polypeptide reads, in one-letter code: ATP phosphoribosyltransferase (282 aa).

The protein belongs to the ATP phosphoribosyltransferase family. Long subfamily. Mg(2+) serves as cofactor.

The protein localises to the cytoplasm. The enzyme catalyses 1-(5-phospho-beta-D-ribosyl)-ATP + diphosphate = 5-phospho-alpha-D-ribose 1-diphosphate + ATP. It functions in the pathway amino-acid biosynthesis; L-histidine biosynthesis; L-histidine from 5-phospho-alpha-D-ribose 1-diphosphate: step 1/9. Its activity is regulated as follows. Feedback inhibited by histidine. Its function is as follows. Catalyzes the condensation of ATP and 5-phosphoribose 1-diphosphate to form N'-(5'-phosphoribosyl)-ATP (PR-ATP). Has a crucial role in the pathway because the rate of histidine biosynthesis seems to be controlled primarily by regulation of HisG enzymatic activity. The chain is ATP phosphoribosyltransferase from Pyrobaculum islandicum (strain DSM 4184 / JCM 9189 / GEO3).